Here is a 105-residue protein sequence, read N- to C-terminus: Mini zinc finger protein 2 (105 aa).

The tract at residues 1–29 is disordered; sequence MGPQQDRSAAKPYANGSTAAAAAAGRKEN. The ZF-HD dimerization-type; degenerate zinc finger occupies 35 to 84; the sequence is YRECQRNHAASIGGHAVDGCREFMASGADGTAAALLCAACGCHQSFHRRE.

In terms of assembly, homo- and heterodimers.

The protein resides in the cytoplasm. Its function is as follows. Inhibits zinc finger homeodomain (ZHD) transcription factors, by interacting with them to prevent both their nuclear localization and their DNA-binding properties. In Oryza sativa subsp. indica (Rice), this protein is Mini zinc finger protein 2 (MIF2).